We begin with the raw amino-acid sequence, 502 residues long: Lysine--tRNA ligase (502 aa).

Glutamate 412 and glutamate 419 together coordinate Mg(2+).

This sequence belongs to the class-II aminoacyl-tRNA synthetase family. Homodimer. Mg(2+) serves as cofactor.

It is found in the cytoplasm. The catalysed reaction is tRNA(Lys) + L-lysine + ATP = L-lysyl-tRNA(Lys) + AMP + diphosphate. The polypeptide is Lysine--tRNA ligase (Buchnera aphidicola subsp. Cinara cedri (strain Cc)).